A 776-amino-acid polypeptide reads, in one-letter code: Transferrin receptor protein 1 (776 aa).

Over 1-70 the chain is Cytoplasmic; sequence MDHARAALSN…QPQRNGKRLC (70 aa). The Endocytosis signal signature appears at 19–22; that stretch reads YTRF. S23 is modified (phosphoserine). Residue C70 is the site of S-palmitoyl cysteine attachment. Residues 71–91 form a helical; Signal-anchor for type II membrane protein membrane-spanning segment; sequence FLVIAAVLLLLIGFLIGYLSY. The Extracellular segment spans residues 92 to 776; it reads RGRIELAARC…GDIWETDNEF (685 aa). The PA domain maps to 230 to 322; the sequence is SESGSVSGKP…GTGDPYTPGF (93 aa). N-linked (GlcNAc...) asparagine glycosylation is found at N261, N326, and N391. Residues 586–776 form a ligand-binding region; the sequence is KGDTLENLRK…GDIWETDNEF (191 aa). Residues 662 to 664 carry the Cell attachment site motif; the sequence is RGD. N738 is a glycosylation site (N-linked (GlcNAc...) asparagine).

This sequence belongs to the peptidase M28 family. M28B subfamily. In terms of assembly, homodimer; disulfide-linked. Binds one transferrin molecule per subunit. Stearoylated. Stearoylation does not affect iron uptake. Post-translationally, N- and O-glycosylated, phosphorylated and palmitoylated.

Its subcellular location is the cell membrane. The protein localises to the melanosome. Its function is as follows. Cellular uptake of iron occurs via receptor-mediated endocytosis of ligand-occupied transferrin receptor into specialized endosomes. Endosomal acidification leads to iron release. The apotransferrin-receptor complex is then recycled to the cell surface with a return to neutral pH and the concomitant loss of affinity of apotransferrin for its receptor. Transferrin receptor is necessary for development of erythrocytes and the nervous system. Acts as a lipid sensor that regulates mitochondrial fusion by regulating activation of the JNK pathway. When dietary levels of stearate (C18:0) are low, promotes activation of the JNK pathway, resulting in HUWE1-mediated ubiquitination and subsequent degradation of the mitofusin MFN2 and inhibition of mitochondrial fusion. When dietary levels of stearate (C18:0) are high, TFRC stearoylation inhibits activation of the JNK pathway and thus degradation of the mitofusin MFN2. Mediates uptake of NICOL1 into fibroblasts where it may regulate extracellular matrix production. The chain is Transferrin receptor protein 1 (TFRC) from Gallus gallus (Chicken).